Reading from the N-terminus, the 337-residue chain is tRNA dimethylallyltransferase (337 aa).

24-31 (GPTGAGKT) provides a ligand contact to ATP. 26-31 (TGAGKT) serves as a coordination point for substrate. Interaction with substrate tRNA stretches follow at residues 49 to 52 (DSRQ) and 188 to 192 (QRAVR).

This sequence belongs to the IPP transferase family. Monomer. Mg(2+) serves as cofactor.

The enzyme catalyses adenosine(37) in tRNA + dimethylallyl diphosphate = N(6)-dimethylallyladenosine(37) in tRNA + diphosphate. Its function is as follows. Catalyzes the transfer of a dimethylallyl group onto the adenine at position 37 in tRNAs that read codons beginning with uridine, leading to the formation of N6-(dimethylallyl)adenosine (i(6)A). The chain is tRNA dimethylallyltransferase from Nitratidesulfovibrio vulgaris (strain DSM 19637 / Miyazaki F) (Desulfovibrio vulgaris).